The sequence spans 61 residues: Large ribosomal subunit protein uL30 (61 aa).

It belongs to the universal ribosomal protein uL30 family. As to quaternary structure, part of the 50S ribosomal subunit.

In Chromobacterium violaceum (strain ATCC 12472 / DSM 30191 / JCM 1249 / CCUG 213 / NBRC 12614 / NCIMB 9131 / NCTC 9757 / MK), this protein is Large ribosomal subunit protein uL30.